We begin with the raw amino-acid sequence, 461 residues long: Kynurenine 3-monooxygenase (461 aa).

FAD is bound by residues 17-18 (LA), 37-39 (ERR), and alanine 56. Arginine 84 and tyrosine 98 together coordinate L-kynurenine. Residues arginine 111, leucine 135, aspartate 311, and 324–325 (MN) each bind FAD. L-kynurenine is bound by residues asparagine 369 and tyrosine 404.

This sequence belongs to the aromatic-ring hydroxylase family. KMO subfamily. The cofactor is FAD.

It catalyses the reaction L-kynurenine + NADPH + O2 + H(+) = 3-hydroxy-L-kynurenine + NADP(+) + H2O. It participates in cofactor biosynthesis; NAD(+) biosynthesis; quinolinate from L-kynurenine: step 1/3. Its pathway is siderophore biosynthesis; quinolobactin biosynthesis. Catalyzes the hydroxylation of L-kynurenine (L-Kyn) to form 3-hydroxy-L-kynurenine (L-3OHKyn). Probably required for the synthesis of quinolinic acid and the siderophore quinolobactin. This Pseudomonas fluorescens protein is Kynurenine 3-monooxygenase.